Here is a 179-residue protein sequence, read N- to C-terminus: Large ribosomal subunit protein uL5 (179 aa).

The protein belongs to the universal ribosomal protein uL5 family. Part of the 50S ribosomal subunit; part of the 5S rRNA/L5/L18/L25 subcomplex. Contacts the 5S rRNA and the P site tRNA. Forms a bridge to the 30S subunit in the 70S ribosome.

Its function is as follows. This is one of the proteins that bind and probably mediate the attachment of the 5S RNA into the large ribosomal subunit, where it forms part of the central protuberance. In the 70S ribosome it contacts protein S13 of the 30S subunit (bridge B1b), connecting the 2 subunits; this bridge is implicated in subunit movement. Contacts the P site tRNA; the 5S rRNA and some of its associated proteins might help stabilize positioning of ribosome-bound tRNAs. The protein is Large ribosomal subunit protein uL5 of Geobacillus thermodenitrificans (strain NG80-2).